The primary structure comprises 50 residues: Photosystem II reaction center protein M (50 aa).

The chain crosses the membrane as a helical span at residues 6-26 (FGFVASLLFVGVPTIFLIGLF).

This sequence belongs to the PsbM family. PSII is composed of 1 copy each of membrane proteins PsbA, PsbB, PsbC, PsbD, PsbE, PsbF, PsbH, PsbI, PsbJ, PsbK, PsbL, PsbM, PsbT, PsbX, PsbY, Psb30/Ycf12, peripheral proteins PsbO, CyanoQ (PsbQ), PsbU, PsbV and a large number of cofactors. It forms dimeric complexes.

It localises to the cellular thylakoid membrane. Its function is as follows. One of the components of the core complex of photosystem II (PSII). PSII is a light-driven water:plastoquinone oxidoreductase that uses light energy to abstract electrons from H(2)O, generating O(2) and a proton gradient subsequently used for ATP formation. It consists of a core antenna complex that captures photons, and an electron transfer chain that converts photonic excitation into a charge separation. This subunit is found at the monomer-monomer interface. This is Photosystem II reaction center protein M from Prochlorococcus marinus (strain MIT 9215).